Here is a 269-residue protein sequence, read N- to C-terminus: 5'-nucleotidase SurE (269 aa).

Positions 11, 12, 43, and 101 each coordinate a divalent metal cation.

The protein belongs to the SurE nucleotidase family. A divalent metal cation is required as a cofactor.

It localises to the cytoplasm. The catalysed reaction is a ribonucleoside 5'-phosphate + H2O = a ribonucleoside + phosphate. Its function is as follows. Nucleotidase that shows phosphatase activity on nucleoside 5'-monophosphates. This Synechococcus sp. (strain WH7803) protein is 5'-nucleotidase SurE.